Here is a 321-residue protein sequence, read N- to C-terminus: MARNKIALIGSGMIGGTLAHLAGLKELGDIVLFDIADGIPQGKGLDIAQSSPVEGFDATLTGASDYAAIEGADVCIVTAGVPRKPGMSRDDLLGINLKVMEQVGAGIKKYAPNAFVICITNPLDAMVWALQKFSGLPKNKVVGMAGVLDSSRFRLFLAQEFNVSVQDITAFVLGGHGDTMVPLARYSTVAGIPLTDLVQMGWVTKERLEEIIQRTRDGGAEIVGLLKTGSAYYAPAASAIEMAEAYLKDKKRVLPCAAHLSGQYGVKDMYVGVPTVIGAGGVERIIEIDLNKGEKEAFDKSVGAVAGLCEACIGIAPSLKQ.

NAD(+) is bound by residues glycine 10–glycine 15 and aspartate 34. Substrate is bound by residues arginine 83 and arginine 89. Residues asparagine 96 and isoleucine 119–asparagine 121 each bind NAD(+). Substrate-binding residues include asparagine 121 and arginine 152. Catalysis depends on histidine 176, which acts as the Proton acceptor.

This sequence belongs to the LDH/MDH superfamily. MDH type 3 family.

It carries out the reaction (S)-malate + NAD(+) = oxaloacetate + NADH + H(+). Catalyzes the reversible oxidation of malate to oxaloacetate. This is Malate dehydrogenase from Sinorhizobium fredii (strain NBRC 101917 / NGR234).